A 295-amino-acid chain; its full sequence is MNVGKKSEIQVSAKSNLNFLNELIEEKKRYEDEKRKISHQKYTDKLLEANDNETTKRKLLVKQKRKSNKEFQSNIIKKRKDEERKGTLKTEQANEEELLQRSRLELERKAKKYDQYAAGELEIKETEDDGILVDFTRKWAEEAPENETVEITDEFGRTRSVSIYETGNTLLSQKEEYKPEKPIYGDYMPSFEVDEEKVQKLWKEDEQQAVHYDSTKEVRNKGTAFYQFSFDEKEREEQLLSLKEIHAKVTQQQRKNTEDVLTLRDKKLEERRKFLERDYAIKLGERWMSEHFSNN.

Over residues 57 to 67 the composition is skewed to basic residues; sequence RKLLVKQKRKS. The tract at residues 57–94 is disordered; it reads RKLLVKQKRKSNKEFQSNIIKKRKDEERKGTLKTEQAN. The span at 79 to 88 shows a compositional bias: basic and acidic residues; sequence RKDEERKGTL. Coiled coils occupy residues 87-116 and 259-286; these read TLKT…YDQY and DVLT…LGER.

The protein resides in the nucleus. This is an uncharacterized protein from Schizosaccharomyces pombe (strain 972 / ATCC 24843) (Fission yeast).